Here is a 612-residue protein sequence, read N- to C-terminus: Threonine--tRNA ligase (612 aa).

Residues 218–509 are catalytic; sequence DHRKLGVELG…LSEHFGGNFP (292 aa). Residues Cys-310, His-361, and His-486 each contribute to the Zn(2+) site.

Belongs to the class-II aminoacyl-tRNA synthetase family. As to quaternary structure, homodimer. Zn(2+) serves as cofactor.

It is found in the cytoplasm. It carries out the reaction tRNA(Thr) + L-threonine + ATP = L-threonyl-tRNA(Thr) + AMP + diphosphate + H(+). In terms of biological role, catalyzes the attachment of threonine to tRNA(Thr) in a two-step reaction: L-threonine is first activated by ATP to form Thr-AMP and then transferred to the acceptor end of tRNA(Thr). Also edits incorrectly charged L-seryl-tRNA(Thr). This is Threonine--tRNA ligase from Helicobacter pylori (strain G27).